The sequence spans 212 residues: 3,4-dihydroxy-2-butanone 4-phosphate synthase (212 aa).

Residues 37–38 (RE), Asp42, 150–154 (RRGHT), and Glu174 contribute to the D-ribulose 5-phosphate site. Glu38 contacts Mg(2+). Residue His153 participates in Mg(2+) binding.

The protein belongs to the DHBP synthase family. In terms of assembly, homodimer. The cofactor is Mg(2+). It depends on Mn(2+) as a cofactor.

It carries out the reaction D-ribulose 5-phosphate = (2S)-2-hydroxy-3-oxobutyl phosphate + formate + H(+). Its pathway is cofactor biosynthesis; riboflavin biosynthesis; 2-hydroxy-3-oxobutyl phosphate from D-ribulose 5-phosphate: step 1/1. In terms of biological role, catalyzes the conversion of D-ribulose 5-phosphate to formate and 3,4-dihydroxy-2-butanone 4-phosphate. This is 3,4-dihydroxy-2-butanone 4-phosphate synthase from Shewanella halifaxensis (strain HAW-EB4).